The sequence spans 373 residues: Probable pectin lyase C (373 aa).

The N-terminal stretch at 1 to 18 (MKVPFLQLLCLNAALASA) is a signal peptide. Intrachain disulfides connect Cys81/Cys100 and Cys90/Cys220. The N-linked (GlcNAc...) asparagine glycan is linked to Asn123. Arg250 is a catalytic residue. The cysteines at positions 316 and 324 are disulfide-linked.

It belongs to the polysaccharide lyase 1 family.

It is found in the secreted. The catalysed reaction is Eliminative cleavage of (1-&gt;4)-alpha-D-galacturonan methyl ester to give oligosaccharides with 4-deoxy-6-O-methyl-alpha-D-galact-4-enuronosyl groups at their non-reducing ends.. In terms of biological role, pectinolytic enzymes consist of four classes of enzymes: pectin lyase, polygalacturonase, pectin methylesterase and rhamnogalacturonase. Among pectinolytic enzymes, pectin lyase is the most important in depolymerization of pectin, since it cleaves internal glycosidic bonds of highly methylated pectins. This is Probable pectin lyase C (pelC) from Aspergillus niger (strain ATCC MYA-4892 / CBS 513.88 / FGSC A1513).